A 308-amino-acid chain; its full sequence is Prephenate dehydratase (308 aa).

A Prephenate dehydratase domain is found at 3 to 187 (RITYLGPEGT…AHTRFVLVGR (185 aa)). The region spanning 201-278 (SVVLGLGNVP…EDVRYLGSWP (78 aa)) is the ACT domain.

In terms of assembly, homodimer.

It carries out the reaction prephenate + H(+) = 3-phenylpyruvate + CO2 + H2O. It functions in the pathway amino-acid biosynthesis; L-phenylalanine biosynthesis; phenylpyruvate from prephenate: step 1/1. This is Prephenate dehydratase (pheA) from Mycobacteroides abscessus (strain ATCC 19977 / DSM 44196 / CCUG 20993 / CIP 104536 / JCM 13569 / NCTC 13031 / TMC 1543 / L948) (Mycobacterium abscessus).